Reading from the N-terminus, the 496-residue chain is 4-O-methyl-glucuronoyl methylesterase 1 (496 aa).

Positions 1–19 (MKSTVASALLVLAGTAVQA) are cleaved as a signal peptide. A CBM1 domain is found at 20 to 55 (QSGPWQQCGGIGWQGPFTCVSGHTCQVLNDWYHQCV). The disordered stretch occupies residues 57-151 (GGGPSPPPTS…RLPDPFTFHN (95 aa)). Over residues 59-125 (GPSPPPTSPP…SPPPTSPPPS (67 aa)) the composition is skewed to pro residues. 3 cysteine pairs are disulfide-bonded: Cys129-Cys163, Cys307-Cys443, and Cys339-Cys415. The short motif at 306–311 (GCSRNG) is the GXSYXG catalytic site motif element. The Nucleophile role is filled by Ser308. Residues Lys312, Gln354, Glu362, and Trp406 each coordinate substrate. The active-site Proton donor/acceptor is His442.

Belongs to the carbohydrate esterase 15 (CE15) family.

The protein localises to the secreted. It catalyses the reaction a 4-O-methyl-alpha-D-glucuronosyl ester derivative + H2O = 4-O-methyl-alpha-D-glucuronate derivative + an alcohol + H(+). Its function is as follows. Glucuronoyl esterase which may play a significant role in biomass degradation, as it is considered to disconnect hemicellulose from lignin through the hydrolysis of the ester bond between 4-O-methyl-D-glucuronic acid residues of glucuronoxylans and aromatic alcohols of lignin. Cleaves native lignin-carbohydrate (LC) ester bonds from LC complex preparations of spruce (softwood) and birch (hardwood), containing mainly hemicelluloses with partially acetylated glucomannans in spruce and partially acetylated xylan in birch. Can hydrolyze benzyl glucuronic acid (BnGlcA), allyl glucuronic acid (allylGlcA) and to a lower degree methyl glucuronic acid (MeGlcA) in vitro. The polypeptide is 4-O-methyl-glucuronoyl methylesterase 1 (Sodiomyces alcalophilus (Acremonium alcalophilum)).